The sequence spans 362 residues: Class I histocompatibility antigen, Gogo-B*0103 alpha chain (362 aa).

The N-terminal stretch at 1–24 (MRVTAPRTLLLLLSAALALTETWA) is a signal peptide. The tract at residues 25 to 114 (GSHSMRYFDT…ALRYYNQSEA (90 aa)) is alpha-1. At 25–308 (GSHSMRYFDT…EPSSQSTIPI (284 aa)) the chain is on the extracellular side. N-linked (GlcNAc...) asparagine glycosylation occurs at Asn-110. Residues 115–206 (GSHTIQWMYG…ENGRETLQRA (92 aa)) are alpha-2. 2 disulfide bridges follow: Cys-125-Cys-188 and Cys-227-Cys-283. The tract at residues 207 to 298 (DTPKTHVTHH…GLPKPLTLRW (92 aa)) is alpha-3. Residues 209–295 (PKTHVTHHPI…QHEGLPKPLT (87 aa)) enclose the Ig-like C1-type domain. Residues 299–308 (EPSSQSTIPI) form a connecting peptide region. Residues 309–332 (VGIVAGLAVLAVVVIGAVVTAVIC) traverse the membrane as a helical segment. At 333–362 (RRKSSGGKGGSYSQAASSDSAQGSDVSLTA) the chain is on the cytoplasmic side. Residues 335–362 (KSSGGKGGSYSQAASSDSAQGSDVSLTA) are disordered. The span at 343-362 (SYSQAASSDSAQGSDVSLTA) shows a compositional bias: low complexity.

The protein belongs to the MHC class I family. Heterodimer of an alpha chain and a beta chain (beta-2-microglobulin).

Its subcellular location is the membrane. Involved in the presentation of foreign antigens to the immune system. The polypeptide is Class I histocompatibility antigen, Gogo-B*0103 alpha chain (Gorilla gorilla gorilla (Western lowland gorilla)).